The primary structure comprises 364 residues: Aminomethyltransferase (364 aa).

Belongs to the GcvT family. As to quaternary structure, the glycine cleavage system is composed of four proteins: P, T, L and H.

It catalyses the reaction N(6)-[(R)-S(8)-aminomethyldihydrolipoyl]-L-lysyl-[protein] + (6S)-5,6,7,8-tetrahydrofolate = N(6)-[(R)-dihydrolipoyl]-L-lysyl-[protein] + (6R)-5,10-methylene-5,6,7,8-tetrahydrofolate + NH4(+). Functionally, the glycine cleavage system catalyzes the degradation of glycine. This Shewanella sp. (strain MR-4) protein is Aminomethyltransferase.